The following is a 226-amino-acid chain: ATP synthase F(0) complex subunit a (226 aa).

6 consecutive transmembrane segments (helical) span residues 12–32 (PTVL…LLIP), 68–88 (WSLM…LGLL), 97–117 (QLSM…AMGL), 138–158 (IPML…ALAV), 182–202 (LAIN…LTIL), and 203–223 (ETAI…LYLH).

This sequence belongs to the ATPase A chain family. In terms of assembly, component of the ATP synthase complex composed at least of ATP5F1A/subunit alpha, ATP5F1B/subunit beta, ATP5MC1/subunit c (homooctomer), MT-ATP6/subunit a, MT-ATP8/subunit 8, ATP5ME/subunit e, ATP5MF/subunit f, ATP5MG/subunit g, ATP5MK/subunit k, ATP5MJ/subunit j, ATP5F1C/subunit gamma, ATP5F1D/subunit delta, ATP5F1E/subunit epsilon, ATP5PF/subunit F6, ATP5PB/subunit b, ATP5PD/subunit d, ATP5PO/subunit OSCP. ATP synthase complex consists of a soluble F(1) head domain (subunits alpha(3) and beta(3)) - the catalytic core - and a membrane F(0) domain - the membrane proton channel (subunits c, a, 8, e, f, g, k and j). These two domains are linked by a central stalk (subunits gamma, delta, and epsilon) rotating inside the F1 region and a stationary peripheral stalk (subunits F6, b, d, and OSCP). Interacts with DNAJC30; interaction is direct.

It localises to the mitochondrion inner membrane. The catalysed reaction is H(+)(in) = H(+)(out). Its function is as follows. Subunit a, of the mitochondrial membrane ATP synthase complex (F(1)F(0) ATP synthase or Complex V) that produces ATP from ADP in the presence of a proton gradient across the membrane which is generated by electron transport complexes of the respiratory chain. ATP synthase complex consist of a soluble F(1) head domain - the catalytic core - and a membrane F(1) domain - the membrane proton channel. These two domains are linked by a central stalk rotating inside the F(1) region and a stationary peripheral stalk. During catalysis, ATP synthesis in the catalytic domain of F(1) is coupled via a rotary mechanism of the central stalk subunits to proton translocation. With the subunit c (ATP5MC1), forms the proton-conducting channel in the F(0) domain, that contains two crucial half-channels (inlet and outlet) that facilitate proton movement from the mitochondrial intermembrane space (IMS) into the matrix. Protons are taken up via the inlet half-channel and released through the outlet half-channel, following a Grotthuss mechanism. The chain is ATP synthase F(0) complex subunit a from Pongo abelii (Sumatran orangutan).